A 527-amino-acid chain; its full sequence is Pyruvate kinase 2, cytosolic (527 aa).

Position 58 (R58) interacts with substrate. K(+)-binding residues include D60, S62, D92, and T93. Residue 60–63 (DFSW) participates in ATP binding. K256 contributes to the substrate binding site. E258 serves as a coordination point for Mg(2+). Positions 281, 282, and 313 each coordinate substrate. N282 is a Mg(2+) binding site.

Belongs to the pyruvate kinase family. As to quaternary structure, homotetramer. Mg(2+) is required as a cofactor. The cofactor is K(+).

Its subcellular location is the cytoplasm. It is found in the cytosol. The enzyme catalyses pyruvate + ATP = phosphoenolpyruvate + ADP + H(+). The protein operates within carbohydrate degradation; glycolysis; pyruvate from D-glyceraldehyde 3-phosphate: step 5/5. Key regulatory enzyme of the glycolytic pathway that catalyzes the final step of glycolysis, converting ADP and phosphoenolpyruvate (PEP) to ATP and pyruvate by essentially irreversible transphosphorylation. This Oryza sativa subsp. indica (Rice) protein is Pyruvate kinase 2, cytosolic.